Reading from the N-terminus, the 107-residue chain is uncharacterized protein (107 aa).

Topologically, residues 1–4 are cytoplasmic; it reads MSLV. Residues 5–25 form a helical membrane-spanning segment; sequence IDIADTIVSLTALIGLIITLI. Over 26–107 the chain is Extracellular; sequence KFHSQNKEDA…ELCRSSDRSK (82 aa).

Its subcellular location is the host membrane. This is an uncharacterized protein from Acidianus sp. F28 (AFV-2).